The chain runs to 500 residues: Betaine aldehyde dehydrogenase, chloroplastic (500 aa).

Residues 1-7 constitute a chloroplast transit peptide; the sequence is MSMPIPS. 238–243 serves as a coordination point for NAD(+); that stretch reads GSSATG. The active-site Proton acceptor is the Glu-260. The active-site Nucleophile is Cys-294.

It belongs to the aldehyde dehydrogenase family. Homodimer.

Its subcellular location is the plastid. It localises to the chloroplast. The catalysed reaction is betaine aldehyde + NAD(+) + H2O = glycine betaine + NADH + 2 H(+). It functions in the pathway amine and polyamine biosynthesis; betaine biosynthesis via choline pathway; betaine from betaine aldehyde: step 1/1. The protein is Betaine aldehyde dehydrogenase, chloroplastic of Beta vulgaris (Sugar beet).